The following is a 54-amino-acid chain: Small ribosomal subunit protein uS14 (54 aa).

Zn(2+) contacts are provided by C19, C22, C37, and C40.

Belongs to the universal ribosomal protein uS14 family. Zinc-binding uS14 subfamily. As to quaternary structure, part of the 30S ribosomal subunit. The cofactor is Zn(2+).

Binds 16S rRNA, required for the assembly of 30S particles. In Saccharolobus solfataricus (strain ATCC 35092 / DSM 1617 / JCM 11322 / P2) (Sulfolobus solfataricus), this protein is Small ribosomal subunit protein uS14.